We begin with the raw amino-acid sequence, 535 residues long: MTHSTLHQPDTATGQGLQRQLIVILDFGSQYSELIARRIRETQVYSEVISYRTTAEQLAQLAPKGIILSGGPNSVYDENAPQCDPEIWNLGIPILGVCYGMQLMVQQLGGTVERAIAGEYGKAALFIDDPTDLLTNVEQETIMWMSHGDSVTELPPGFRVLAHTDNTPIAAIAHPERKLYGVQFHPEVVHSVGGIALIRNFVYHICDCEPTWTTAAFVEEAIREVRAKVGDKRVLLALSGGVDSSTLAFLLHRAIGDQLTCMFIDQGFMRKGEPERLLKLFQEQFHIKVEYVNARDRFLAQLVGVTDPEEKRKRIGHEFIRVFEEESQRLGPFDYLAQGTLYPDVIESANTNIDPQTGERVAVKIKSHHNVGGLPENLRFKLVEPLRKLFKDEVRQVGRSLGLPEEIVQRHPFPGPGLAIRILGEVTPERLEILRDADLIVRQEINRAQMYHELWQAFAVLLPIRTVGVMGDQRTYAYPVVLRFVTSEDGMTADWARVPYDLLERISNRIVNEVPGVNRVVYDITSKPPGTIEWE.

In terms of domain architecture, Glutamine amidotransferase type-1 spans 21–211 (LIVILDFGSQ…VYHICDCEPT (191 aa)). Cysteine 98 functions as the Nucleophile in the catalytic mechanism. Catalysis depends on residues histidine 185 and glutamate 187. Residues 212–410 (WTTAAFVEEA…LGLPEEIVQR (199 aa)) enclose the GMPS ATP-PPase domain. Residue 239 to 245 (SGGVDSS) participates in ATP binding.

In terms of assembly, homodimer.

The enzyme catalyses XMP + L-glutamine + ATP + H2O = GMP + L-glutamate + AMP + diphosphate + 2 H(+). It functions in the pathway purine metabolism; GMP biosynthesis; GMP from XMP (L-Gln route): step 1/1. Functionally, catalyzes the synthesis of GMP from XMP. The protein is GMP synthase [glutamine-hydrolyzing] of Thermosynechococcus vestitus (strain NIES-2133 / IAM M-273 / BP-1).